A 99-amino-acid polypeptide reads, in one-letter code: Beta-defensin 127 (99 aa).

The first 20 residues, Met1–Gln20, serve as a signal peptide directing secretion. 3 cysteine pairs are disulfide-bonded: Cys24–Cys53, Cys33–Cys47, and Cys37–Cys54. The propeptide occupies Ile66–Thr99.

It belongs to the beta-defensin family.

The protein localises to the secreted. Its function is as follows. Has antibacterial activity. The chain is Beta-defensin 127 (DEFB127) from Homo sapiens (Human).